A 259-amino-acid chain; its full sequence is L-erythrulose-1-phosphate isomerase (259 aa).

The active-site Electrophile is the His102. Glu174 serves as the catalytic Proton acceptor.

Belongs to the triosephosphate isomerase family.

The catalysed reaction is L-erythrulose 1-phosphate = D-erythrulose 4-phosphate. It participates in carbohydrate metabolism. Functionally, involved in catabolism of D-apiose. Catalyzes the isomerization of L-erythrulose 1-phosphate to D-erythrulose 4-phosphate. In Pectobacterium atrosepticum (strain SCRI 1043 / ATCC BAA-672) (Erwinia carotovora subsp. atroseptica), this protein is L-erythrulose-1-phosphate isomerase.